The following is a 366-amino-acid chain: Chorismate synthase (366 aa).

Arg-48 and Arg-54 together coordinate NADP(+). FMN-binding positions include 125 to 127, 241 to 242, Gly-285, 300 to 304, and Arg-326; these read RSS, NA, and KPTSS.

The protein belongs to the chorismate synthase family. Homotetramer. FMNH2 serves as cofactor.

The catalysed reaction is 5-O-(1-carboxyvinyl)-3-phosphoshikimate = chorismate + phosphate. The protein operates within metabolic intermediate biosynthesis; chorismate biosynthesis; chorismate from D-erythrose 4-phosphate and phosphoenolpyruvate: step 7/7. Functionally, catalyzes the anti-1,4-elimination of the C-3 phosphate and the C-6 proR hydrogen from 5-enolpyruvylshikimate-3-phosphate (EPSP) to yield chorismate, which is the branch point compound that serves as the starting substrate for the three terminal pathways of aromatic amino acid biosynthesis. This reaction introduces a second double bond into the aromatic ring system. In Cereibacter sphaeroides (strain ATCC 17023 / DSM 158 / JCM 6121 / CCUG 31486 / LMG 2827 / NBRC 12203 / NCIMB 8253 / ATH 2.4.1.) (Rhodobacter sphaeroides), this protein is Chorismate synthase.